The sequence spans 548 residues: Inosine-5'-monophosphate dehydrogenase (548 aa).

2 CBS domains span residues 121–201 and 205–261; these read FILD…EDPV and MSTE…PLAS. NAD(+) contacts are provided by residues 298 to 300 and 348 to 350; these read DSS and GMG. Positions 350 and 352 each coordinate K(+). Ser353 lines the IMP pocket. Cys355 provides a ligand contact to K(+). Catalysis depends on Cys355, which acts as the Thioimidate intermediate. IMP is bound by residues 388 to 390 and 411 to 412; these read DGG and GS. Catalysis depends on Arg461, which acts as the Proton acceptor. Gln473 lines the IMP pocket. The segment at 527–548 is disordered; sequence ASAQTEGNVHGLHSHEKKLYSS. K(+) is bound at residue Ser528. The segment covering 539–548 has biased composition (basic and acidic residues); it reads HSHEKKLYSS.

This sequence belongs to the IMPDH/GMPR family. In terms of assembly, homotetramer. It depends on K(+) as a cofactor.

Its subcellular location is the cytoplasm. The enzyme catalyses IMP + NAD(+) + H2O = XMP + NADH + H(+). It functions in the pathway purine metabolism; XMP biosynthesis via de novo pathway; XMP from IMP: step 1/1. With respect to regulation, mycophenolic acid (MPA) is a non-competitive inhibitor that prevents formation of the closed enzyme conformation by binding to the same site as the amobile flap. In contrast, mizoribine monophosphate (MZP) is a competitive inhibitor that induces the closed conformation. MPA is a potent inhibitor of mammalian IMPDHs but a poor inhibitor of the bacterial enzymes. MZP is a more potent inhibitor of bacterial IMPDH. In terms of biological role, catalyzes the conversion of inosine 5'-phosphate (IMP) to xanthosine 5'-phosphate (XMP), the first committed and rate-limiting step in the de novo synthesis of guanine nucleotides, and therefore plays an important role in the regulation of cell growth. Part of the gene cluster that mediates the biosynthesis of mycophenolic acid (MPA), the first isolated antibiotic natural product in the world. Does not play a role in the biosynthesis of MPA, but is involved in self resistance to MPA, since MPA acts as an inhibitor of IMP dehydrogenases. This Penicillium brevicompactum protein is Inosine-5'-monophosphate dehydrogenase.